A 198-amino-acid polypeptide reads, in one-letter code: MELPDPVRQRLSNLSLTVFGDSSRTGPESSDAADNEMVSSLALQMSLYFNSYFFPLWWVSCIVMLHLKYSILPDYYKFIVVTVVILITLIEAIRLYLGCMGNLQEKVPELAGFWLLSLLLQLPLILFLLLNDGLRNLPLEKAIHIIFTIFLTFQVISAFLTLKKMVNQLAARFHLQDFDQLSSSSAAVRRVRQCTEEL.

A glycan (N-linked (GlcNAc...) asparagine) is linked at N13. A run of 4 helical transmembrane segments spans residues 47-67 (LYFNSYFFPLWWVSCIVMLHL), 78-98 (FIVVTVVILITLIEAIRLYLG), 110-130 (LAGFWLLSLLLQLPLILFLLL), and 142-162 (AIHIIFTIFLTFQVISAFLTL).

It belongs to the TMEM17 family. As to quaternary structure, part of the tectonic-like complex (also named B9 complex).

It localises to the cell projection. Its subcellular location is the cilium membrane. Functionally, transmembrane component of the tectonic-like complex, a complex localized at the transition zone of primary cilia and acting as a barrier that prevents diffusion of transmembrane proteins between the cilia and plasma membranes. Required for ciliogenesis and sonic hedgehog/SHH signaling. The protein is Transmembrane protein 17 (Tmem17) of Mus musculus (Mouse).